Reading from the N-terminus, the 725-residue chain is Glyoxysomal fatty acid beta-oxidation multifunctional protein MFP-a (725 aa).

It in the N-terminal section; belongs to the enoyl-CoA hydratase/isomerase family. The protein in the central section; belongs to the 3-hydroxyacyl-CoA dehydrogenase family.

The protein resides in the glyoxysome. The enzyme catalyses a (3S)-3-hydroxyacyl-CoA = a (2E)-enoyl-CoA + H2O. It carries out the reaction a 4-saturated-(3S)-3-hydroxyacyl-CoA = a (3E)-enoyl-CoA + H2O. The catalysed reaction is a (3Z)-enoyl-CoA = a 4-saturated (2E)-enoyl-CoA. It catalyses the reaction a (3E)-enoyl-CoA = a 4-saturated (2E)-enoyl-CoA. The enzyme catalyses (3S)-3-hydroxybutanoyl-CoA = (3R)-3-hydroxybutanoyl-CoA. It carries out the reaction a (3S)-3-hydroxyacyl-CoA + NAD(+) = a 3-oxoacyl-CoA + NADH + H(+). The protein operates within lipid metabolism; fatty acid beta-oxidation. The sequence is that of Glyoxysomal fatty acid beta-oxidation multifunctional protein MFP-a from Cucumis sativus (Cucumber).